A 470-amino-acid polypeptide reads, in one-letter code: ATP synthase subunit beta (470 aa).

ATP is bound at residue Gly156–Thr163.

Belongs to the ATPase alpha/beta chains family. In terms of assembly, F-type ATPases have 2 components, CF(1) - the catalytic core - and CF(0) - the membrane proton channel. CF(1) has five subunits: alpha(3), beta(3), gamma(1), delta(1), epsilon(1). CF(0) has three main subunits: a(1), b(2) and c(9-12). The alpha and beta chains form an alternating ring which encloses part of the gamma chain. CF(1) is attached to CF(0) by a central stalk formed by the gamma and epsilon chains, while a peripheral stalk is formed by the delta and b chains.

Its subcellular location is the cell inner membrane. It carries out the reaction ATP + H2O + 4 H(+)(in) = ADP + phosphate + 5 H(+)(out). Produces ATP from ADP in the presence of a proton gradient across the membrane. The catalytic sites are hosted primarily by the beta subunits. The chain is ATP synthase subunit beta from Thermosipho africanus (strain TCF52B).